The sequence spans 345 residues: Phosphoribosylformylglycinamidine cyclo-ligase (345 aa).

The protein belongs to the AIR synthase family.

The protein localises to the cytoplasm. The enzyme catalyses 2-formamido-N(1)-(5-O-phospho-beta-D-ribosyl)acetamidine + ATP = 5-amino-1-(5-phospho-beta-D-ribosyl)imidazole + ADP + phosphate + H(+). It participates in purine metabolism; IMP biosynthesis via de novo pathway; 5-amino-1-(5-phospho-D-ribosyl)imidazole from N(2)-formyl-N(1)-(5-phospho-D-ribosyl)glycinamide: step 2/2. In Histophilus somni (strain 129Pt) (Haemophilus somnus), this protein is Phosphoribosylformylglycinamidine cyclo-ligase.